A 163-amino-acid chain; its full sequence is Protein NAG1 (163 aa).

A helical membrane pass occupies residues 76–96; the sequence is ACFSVRIVLPLSLTISISALM.

The protein resides in the membrane. Functionally, involved in yeast cell wall biogenesis. The sequence is that of Protein NAG1 (NAG1) from Saccharomyces cerevisiae (strain ATCC 204508 / S288c) (Baker's yeast).